The following is a 207-amino-acid chain: MALRLVEELTNEGIIKTERVKKAMLAVPREEFVMPEYRMMAYEDRPLPLFFDATISAPHMVAMMCELVEPRPGMKILEVGTGSGYQAAVCAEAIERKGKVYTIEIVKELAIYAAQNIERLGYWGIVEVYHGDGKKGLERHAPFDAIIVTAAARTIPSELIKQLKDGGVLVIPIEEGVGQVLYKITKRGEKIEKRAITYVLFVPLRDS.

Ser56 is an active-site residue.

This sequence belongs to the methyltransferase superfamily. L-isoaspartyl/D-aspartyl protein methyltransferase family.

It is found in the cytoplasm. It catalyses the reaction [protein]-L-isoaspartate + S-adenosyl-L-methionine = [protein]-L-isoaspartate alpha-methyl ester + S-adenosyl-L-homocysteine. Its function is as follows. Catalyzes the methyl esterification of L-isoaspartyl residues in peptides and proteins that result from spontaneous decomposition of normal L-aspartyl and L-asparaginyl residues. It plays a role in the repair and/or degradation of damaged proteins. This is Protein-L-isoaspartate O-methyltransferase from Pyrobaculum islandicum (strain DSM 4184 / JCM 9189 / GEO3).